Reading from the N-terminus, the 194-residue chain is uncharacterized protein (194 aa).

An N-terminal signal peptide occupies residues 1-24; the sequence is MRKFVAFFVIVALAALLAGCGGQG.

This is an uncharacterized protein from Archaeoglobus fulgidus (strain ATCC 49558 / DSM 4304 / JCM 9628 / NBRC 100126 / VC-16).